Consider the following 258-residue polypeptide: F-box/LRR-repeat protein 25 (258 aa).

One can recognise an F-box domain in the interval 27 to 76 (SDSISNLPDEILHHILSFIPETNLVIRTSVLSKRWRHVWSKTPHLSFEWL). LRR repeat units lie at residues 101-130 (CTSY…SLAF), 136-161 (CNKF…SLTP), 177-202 (RCNL…SLKF), and 224-249 (RRSC…RLRD).

The sequence is that of F-box/LRR-repeat protein 25 (FBL25) from Arabidopsis thaliana (Mouse-ear cress).